The following is a 261-amino-acid chain: MSRYTRPPNTSLFIRNVADATRPEDLRREFGRYGPIVDVYIPLDFYTRRPRGFAYVQFEDVRDAEDALYNLNRKWVCGRQIEIQFAQGDRKTPGQMKSKERHPCSPSDHRRSRSPSQRRTRSRSSSWGRNRRRSDSLKESRHRRFSYSQSKSRSKSLPRRSTSARQSRTPRRNFGSRGRSRSKSLQKRSKSIGKSQSSSPQKQTSSGTKSRSHGRHSDSIARSPCKSPKGYTNSETKVQTAKHSHFRSHSRSRSYRHKNSW.

An RRM domain is found at 10–88 (TSLFIRNVAD…RQIEIQFAQG (79 aa)). Residues 86–261 (AQGDRKTPGQ…SRSYRHKNSW (176 aa)) are disordered. A compositionally biased stretch (basic and acidic residues) spans 88–109 (GDRKTPGQMKSKERHPCSPSDH). 2 stretches are compositionally biased toward basic residues: residues 110-122 (RRSR…RTRS) and 178-191 (GRSR…RSKS). The segment covering 192–209 (IGKSQSSSPQKQTSSGTK) has biased composition (low complexity). Polar residues predominate over residues 230–239 (GYTNSETKVQ). A compositionally biased stretch (basic residues) spans 240-261 (TAKHSHFRSHSRSRSYRHKNSW).

Belongs to the splicing factor SR family. As to expression, expressed in testis.

It localises to the nucleus. In terms of biological role, splicing factor that seems to antagonize SR proteins in pre-mRNA splicing regulation. The chain is Serine/arginine-rich splicing factor 12 (SRSF12) from Homo sapiens (Human).